The sequence spans 297 residues: Golgi-associated RAB2 interactor protein 1A (297 aa).

The disordered stretch occupies residues 226–257 (SNRHQTSRDRHTDTATETDNSGNCKSTPLVAS). Positions 240-257 (ATETDNSGNCKSTPLVAS) are enriched in polar residues.

This sequence belongs to the GARIN family. Interacts (via N-terminus) with RAB2B (in GTP-bound form). In terms of tissue distribution, expressed in testis (at protein level).

It localises to the golgi apparatus. Functionally, RAB2B effector protein required for accurate acrosome formation and normal male fertility. This chain is Golgi-associated RAB2 interactor protein 1A, found in Mus musculus (Mouse).